Consider the following 281-residue polypeptide: Aldo-keto reductase MMAR_1744 (281 aa).

The Proton donor role is filled by Tyr56. 6 residues coordinate NADPH: Leu196, Ile234, Ser237, Thr245, Asn246, and Arg272.

The protein belongs to the aldo/keto reductase family.

The protein is Aldo-keto reductase MMAR_1744 of Mycobacterium marinum (strain ATCC BAA-535 / M).